Here is a 107-residue protein sequence, read N- to C-terminus: Apolipoprotein E (107 aa).

5 repeat units span residues 11-32, 33-54, 55-76, 77-98, and 99-107. The segment at 11–107 is 5 X 22 AA approximate tandem repeats; the sequence is ALMDETMKEL…LRDVDDLQKR (97 aa). Met74 bears the Methionine sulfoxide mark. The residue at position 78 (Ser78) is a Phosphoserine. Residues 89 to 99 are LDL and other lipoprotein receptors binding; it reads HLRKLRKRLLR. Position 93 to 96 (93 to 96) interacts with heparin; sequence LRKR.

Belongs to the apolipoprotein A1/A4/E family. In terms of assembly, homotetramer. May interact with ABCA1; functionally associated with ABCA1 in the biogenesis of HDLs. May interact with APP/A4 amyloid-beta peptide; the interaction is extremely stable in vitro but its physiological significance is unclear. May interact with MAPT. May interact with MAP2. In the cerebrospinal fluid, interacts with secreted SORL1. Interacts with PMEL; this allows the loading of PMEL luminal fragment on ILVs to induce fibril nucleation. In terms of processing, APOE exists as multiple glycosylated and sialylated glycoforms within cells and in plasma. The extent of glycosylation and sialylation are tissue and context specific. Post-translationally, glycated in plasma VLDL. Phosphorylated by FAM20C in the extracellular medium.

The protein resides in the secreted. Its subcellular location is the extracellular space. The protein localises to the extracellular matrix. It is found in the extracellular vesicle. It localises to the endosome. The protein resides in the multivesicular body. In terms of biological role, APOE is an apolipoprotein, a protein associating with lipid particles, that mainly functions in lipoprotein-mediated lipid transport between organs via the plasma and interstitial fluids. APOE is a core component of plasma lipoproteins and is involved in their production, conversion and clearance. Apolipoproteins are amphipathic molecules that interact both with lipids of the lipoprotein particle core and the aqueous environment of the plasma. As such, APOE associates with chylomicrons, chylomicron remnants, very low density lipoproteins (VLDL) and intermediate density lipoproteins (IDL) but shows a preferential binding to high-density lipoproteins (HDL). It also binds a wide range of cellular receptors including the LDL receptor/LDLR, the LDL receptor-related proteins LRP1, LRP2 and LRP8 and the very low-density lipoprotein receptor/VLDLR that mediate the cellular uptake of the APOE-containing lipoprotein particles. Finally, APOE also has a heparin-binding activity and binds heparan-sulfate proteoglycans on the surface of cells, a property that supports the capture and the receptor-mediated uptake of APOE-containing lipoproteins by cells. A main function of APOE is to mediate lipoprotein clearance through the uptake of chylomicrons, VLDLs, and HDLs by hepatocytes. APOE is also involved in the biosynthesis by the liver of VLDLs as well as their uptake by peripheral tissues ensuring the delivery of triglycerides and energy storage in muscle, heart and adipose tissues. By participating in the lipoprotein-mediated distribution of lipids among tissues, APOE plays a critical role in plasma and tissues lipid homeostasis. APOE is also involved in two steps of reverse cholesterol transport, the HDLs-mediated transport of cholesterol from peripheral tissues to the liver, and thereby plays an important role in cholesterol homeostasis. First, it is functionally associated with ABCA1 in the biogenesis of HDLs in tissues. Second, it is enriched in circulating HDLs and mediates their uptake by hepatocytes. APOE also plays an important role in lipid transport in the central nervous system, regulating neuron survival and sprouting. This Saimiri sciureus (Common squirrel monkey) protein is Apolipoprotein E (APOE).